Here is a 174-residue protein sequence, read N- to C-terminus: Gamma-crystallin D (174 aa).

Beta/gamma crystallin 'Greek key' domains are found at residues 2 to 40 and 41 to 83; these read GKIT…RVDS and GCWM…RLIP. Residues 84 to 87 form a connecting peptide region; that stretch reads HAGS. 2 Beta/gamma crystallin 'Greek key' domains span residues 88–128 and 129–171; these read HRIR…NVLE and GCWV…RRVM.

The protein belongs to the beta/gamma-crystallin family. Detected in the superior olivary complex and fibers of the ventral aoustic stria of the auditory hindbrain.

Its function is as follows. Crystallins are the dominant structural components of the vertebrate eye lens. The polypeptide is Gamma-crystallin D (Crygd) (Rattus norvegicus (Rat)).